An 876-amino-acid chain; its full sequence is Alanine--tRNA ligase (876 aa).

Residue K74 is modified to N6-acetyllysine. Zn(2+) is bound by residues H564, H568, C666, and H670.

It belongs to the class-II aminoacyl-tRNA synthetase family. Homotetramer. Requires Zn(2+) as cofactor.

It is found in the cytoplasm. The catalysed reaction is tRNA(Ala) + L-alanine + ATP = L-alanyl-tRNA(Ala) + AMP + diphosphate. Functionally, catalyzes the attachment of alanine to tRNA(Ala) in a two-step reaction: alanine is first activated by ATP to form Ala-AMP and then transferred to the acceptor end of tRNA(Ala). Also edits incorrectly charged Ser-tRNA(Ala) and Gly-tRNA(Ala) via its editing domain. The chain is Alanine--tRNA ligase from Shigella boydii serotype 18 (strain CDC 3083-94 / BS512).